A 660-amino-acid chain; its full sequence is Acetyl-coenzyme A synthetase (660 aa).

CoA is bound by residues Arg197–Lys200 and Thr317. Residues Gly397–Pro399, Asp421–Thr426, Asp512, and Arg528 contribute to the ATP site. Residue Ser536 participates in CoA binding. ATP is bound at residue Arg539. 3 residues coordinate Mg(2+): Val550, His552, and Val555. The residue at position 625 (Lys625) is an N6-acetyllysine.

It belongs to the ATP-dependent AMP-binding enzyme family. It depends on Mg(2+) as a cofactor. In terms of processing, acetylated. Deacetylation by the SIR2-homolog deacetylase activates the enzyme.

It carries out the reaction acetate + ATP + CoA = acetyl-CoA + AMP + diphosphate. Functionally, catalyzes the conversion of acetate into acetyl-CoA (AcCoA), an essential intermediate at the junction of anabolic and catabolic pathways. AcsA undergoes a two-step reaction. In the first half reaction, AcsA combines acetate with ATP to form acetyl-adenylate (AcAMP) intermediate. In the second half reaction, it can then transfer the acetyl group from AcAMP to the sulfhydryl group of CoA, forming the product AcCoA. This Burkholderia thailandensis (strain ATCC 700388 / DSM 13276 / CCUG 48851 / CIP 106301 / E264) protein is Acetyl-coenzyme A synthetase.